The following is a 117-amino-acid chain: NADH-ubiquinone oxidoreductase chain 3 (117 aa).

Transmembrane regions (helical) follow at residues 1–21, 57–77, and 86–106; these read MLMLSIMATIIFIITIVVMML, FFLIAIIFLIFDVEIALLLPM, and LMNWTMTSFFFIFILLIGLYH.

Belongs to the complex I subunit 3 family.

The protein localises to the mitochondrion membrane. It carries out the reaction a ubiquinone + NADH + 5 H(+)(in) = a ubiquinol + NAD(+) + 4 H(+)(out). Core subunit of the mitochondrial membrane respiratory chain NADH dehydrogenase (Complex I) that is believed to belong to the minimal assembly required for catalysis. Complex I functions in the transfer of electrons from NADH to the respiratory chain. The immediate electron acceptor for the enzyme is believed to be ubiquinone. The chain is NADH-ubiquinone oxidoreductase chain 3 (ND3) from Anopheles quadrimaculatus (Common malaria mosquito).